Here is a 307-residue protein sequence, read N- to C-terminus: Cyclin-dependent kinase 5 activator 1 (307 aa).

Gly2 carries the N-myristoyl glycine lipid modification. At Ser8 the chain carries Phosphoserine; by CDK5. Positions 97-136 (TFAQPPPAQPPAPPASQLSGSQTGGSSSVKKAPHPAVTSA) are disordered. A compositionally biased stretch (pro residues) spans 100–110 (QPPPAQPPAPP). A compositionally biased stretch (low complexity) spans 111–124 (ASQLSGSQTGGSSS). Thr138 bears the Phosphothreonine; by CDK5 mark.

This sequence belongs to the cyclin-dependent kinase 5 activator family. In terms of assembly, heterodimer composed of a catalytic subunit CDK5 and a regulatory subunit CDK5R1 (p25) and macromolecular complex composed of at least CDK5, CDK5R1 (p35) and CDK5RAP1 or CDK5RAP2 or CDK5RAP3. Only the heterodimer shows kinase activity. Interacts with EPHA4 and NGEF; may mediate the activation of NGEF by EPHA4. Interacts with RASGRF2. The complex p35/CDK5 interacts with CLOCK. The p35 form is proteolytically cleaved by calpain, giving rise to the p25 form. P35 has a 5 to 10 fold shorter half-life compared to p25. The conversion results in deregulation of the CDK5 kinase: p25/CDK5 kinase displays an increased and altered tau phosphorylation in comparison to the p35/CDK5 kinase in vivo. Post-translationally, myristoylated. A proper myristoylation signal is essential for the proper distribution of p35. In terms of processing, ubiquitinated, leading to its degradation: degradation of p35 by proteasome results in down-regulation of CDK5 activity. During this process, CDK5 phosphorylates p35 and induces its ubiquitination and subsequent degradation. Ubiquitinated by the CRL2(FEM1B) complex, which recognizes the -Gly-Leu-Asp-Arg C-degron at the C-terminus, leading to its degradation. Phosphorylation at Ser-8 and Thr-138 by CDK5 prevents calpain-mediated proteolysis. As to expression, brain and neuron specific.

Its subcellular location is the cell membrane. It localises to the cell projection. The protein resides in the neuron projection. It is found in the nucleus. The protein localises to the cytoplasm. Its subcellular location is the perinuclear region. It localises to the perikaryon. P35 is a neuron specific activator of CDK5. The complex p35/CDK5 is required for neurite outgrowth and cortical lamination. Involved in dendritic spine morphogenesis by mediating the EFNA1-EPHA4 signaling. Activator of TPKII. The complex p35/CDK5 participates in the regulation of the circadian clock by modulating the function of CLOCK protein: phosphorylates CLOCK at 'Thr-451' and 'Thr-461' and regulates the transcriptional activity of the CLOCK-BMAL1 heterodimer in association with altered stability and subcellular distribution. The sequence is that of Cyclin-dependent kinase 5 activator 1 (CDK5R1) from Homo sapiens (Human).